The chain runs to 264 residues: Thymidylate synthase (264 aa).

Residue R21 participates in dUMP binding. H51 is a binding site for (6R)-5,10-methylene-5,6,7,8-tetrahydrofolate. 126–127 (RR) serves as a coordination point for dUMP. Catalysis depends on C146, which acts as the Nucleophile. DUMP-binding positions include 166–169 (RSAD), N177, and 207–209 (HIY). Residue D169 participates in (6R)-5,10-methylene-5,6,7,8-tetrahydrofolate binding. A263 lines the (6R)-5,10-methylene-5,6,7,8-tetrahydrofolate pocket.

It belongs to the thymidylate synthase family. Bacterial-type ThyA subfamily. Homodimer.

Its subcellular location is the cytoplasm. It catalyses the reaction dUMP + (6R)-5,10-methylene-5,6,7,8-tetrahydrofolate = 7,8-dihydrofolate + dTMP. It participates in pyrimidine metabolism; dTTP biosynthesis. Functionally, catalyzes the reductive methylation of 2'-deoxyuridine-5'-monophosphate (dUMP) to 2'-deoxythymidine-5'-monophosphate (dTMP) while utilizing 5,10-methylenetetrahydrofolate (mTHF) as the methyl donor and reductant in the reaction, yielding dihydrofolate (DHF) as a by-product. This enzymatic reaction provides an intracellular de novo source of dTMP, an essential precursor for DNA biosynthesis. In Vesicomyosocius okutanii subsp. Calyptogena okutanii (strain HA), this protein is Thymidylate synthase.